The chain runs to 164 residues: FMN reductase (NADH) RutF (164 aa).

The protein belongs to the non-flavoprotein flavin reductase family. RutF subfamily.

It carries out the reaction FMNH2 + NAD(+) = FMN + NADH + 2 H(+). Its function is as follows. Catalyzes the reduction of FMN to FMNH2 which is used to reduce pyrimidine by RutA via the Rut pathway. This Escherichia coli O150:H5 (strain SE15) protein is FMN reductase (NADH) RutF.